The primary structure comprises 281 residues: Protein EMBRYO DEFECTIVE 1674 (281 aa).

2 stretches are compositionally biased toward polar residues: residues M1–S14 and P24–S41. The interval M1–T47 is disordered. Residues V66 to Y153 enclose the SANTA domain.

Functionally, required for normal embryo development. The sequence is that of Protein EMBRYO DEFECTIVE 1674 from Arabidopsis thaliana (Mouse-ear cress).